The following is a 44-amino-acid chain: F420-non-reducing hydrogenase vhu subunit U (44 aa).

Residues selenocysteine 20 and cysteine 23 each contribute to the Ni(2+) site. A non-standard amino acid (selenocysteine) is located at residue selenocysteine 20. Positions 27–44 are cleaved as a propeptide — removed in mature form; sequence MIVEDAEGNVVFEIVNDE.

The protein belongs to the [NiFe]/[NiFeSe] hydrogenase large subunit family. The F420-non-reducing hydrogenase vhu is composed of four subunits; VhuA, VhuD, VhuG and VhuU. Ni(2+) is required as a cofactor.

The polypeptide is F420-non-reducing hydrogenase vhu subunit U (vhuU) (Methanococcus voltae).